Consider the following 471-residue polypeptide: MEPVSSWGNTSLVSVDPEIHDLIEKEKRRQCRGIELIASENFTSFAVIEALGSALTNKYSEGIPGNRYYGGNEFIDEIENLCRSRALEAFHCDPAAWGVNVQPYSGSPANFAAYTALLQPHDRIMGLDLPSGGHLTHGYYTSGGKKISATSIYFESLPYKVNFTTGYIDYDKLEEKALDFRPKLLICGGSAYPRDWDYARFRAIADKVGALLLCDMAHISGLVAAQEAANPFEYCDVVTTTTHKSLRGPRAGMIFYRKGPKPPKKGQPEGAVYDFEDKINFAVFPALQGGPHNHQIGALAVALKQANTPGFKVYAKQVKANAVALGNYLMSKGYQIVTNGTENHLVLWDLRPLGLTGNKVEKLCDLCSITLNKNAVFGDSSALAPGGVRIGAPAMTSRGLVEKDFEQIGEFLSRAVTLTLDIQKTYGKLLKDFNKGLVNNKDLDQLKADVEKFSASYEMPGFLMSEMKYKD.

At Met1 the chain carries N-acetylmethionine. Ser39 provides a ligand contact to L-serine. 3 residues coordinate pemetrexed: Ser39, Tyr59, and Glu61. L-serine contacts are provided by Glu61 and Tyr69. Residues 105 to 107, His134, Ser190, and His218 contribute to the pemetrexed site; that span reads SGS. L-serine is bound by residues His218 and Lys244. Lys244 is subject to N6-(pyridoxal phosphate)lysine. Residue Gly290 participates in pemetrexed binding. Residue Lys373 participates in methotrexate binding. Arg389 contributes to the L-serine binding site. Arg389 is a binding site for pemetrexed.

Belongs to the SHMT family. As to quaternary structure, homotetramer. Interacts with UBP16. It depends on pyridoxal 5'-phosphate as a cofactor. As to expression, mostly expressed in flowers, less abundant in roots, inflorescence stems, and siliques, and barely detectable in leaves.

Its subcellular location is the cytoplasm. The catalysed reaction is (6R)-5,10-methylene-5,6,7,8-tetrahydrofolate + glycine + H2O = (6S)-5,6,7,8-tetrahydrofolate + L-serine. The protein operates within one-carbon metabolism; tetrahydrofolate interconversion. With respect to regulation, inhibited by the antifolate drugs methotrexate and pemetrexed. Catalyzes the interconversion of serine and glycine with the conversion of tetrahydrofolate (THF) into 5,10-methylene-THF. The chain is Serine hydroxymethyltransferase 4 from Arabidopsis thaliana (Mouse-ear cress).